Consider the following 311-residue polypeptide: MSVVNNRVALTNLVSMEALTTEEVLGLINRGSEYKAGKVVISDHQKDLVANLFFENSTRTHKSFEVAEKKLGLTVLDFNADASAVNKGESLYDTVLTMSALGTDICVIRHPEDDYYKELVESPTITASIVNGGDGSGQHPSQCLLDLLTIYEEFGHFEGLKIAIAGDLTHSRVAKSNMQILKRLGAELYFYGPEEWYSEAFNAYGTYIAIDQIIKELDVLMLLRVQHERHDGHQSFSKEGYHQAFGLTQERYQQLKDSAIIMHPAPVNRDVEIADSLVEAPKARIVSQMANGVFVRMAIIEAILNGRNKNS.

2 residues coordinate carbamoyl phosphate: Arg-59 and Thr-60. Lys-87 serves as a coordination point for L-aspartate. Carbamoyl phosphate-binding residues include Arg-109, His-139, and Gln-142. Arg-172 and Arg-224 together coordinate L-aspartate. Residues Ala-265 and Pro-266 each contribute to the carbamoyl phosphate site.

It belongs to the aspartate/ornithine carbamoyltransferase superfamily. ATCase family. In terms of assembly, heterododecamer (2C3:3R2) of six catalytic PyrB chains organized as two trimers (C3), and six regulatory PyrI chains organized as three dimers (R2).

It carries out the reaction carbamoyl phosphate + L-aspartate = N-carbamoyl-L-aspartate + phosphate + H(+). It participates in pyrimidine metabolism; UMP biosynthesis via de novo pathway; (S)-dihydroorotate from bicarbonate: step 2/3. Its function is as follows. Catalyzes the condensation of carbamoyl phosphate and aspartate to form carbamoyl aspartate and inorganic phosphate, the committed step in the de novo pyrimidine nucleotide biosynthesis pathway. The chain is Aspartate carbamoyltransferase catalytic subunit from Streptococcus pyogenes serotype M12 (strain MGAS2096).